The primary structure comprises 172 residues: NADH-quinone oxidoreductase subunit B (172 aa).

Cys-42, Cys-43, Cys-107, and Cys-136 together coordinate [4Fe-4S] cluster.

This sequence belongs to the complex I 20 kDa subunit family. NDH-1 is composed of 14 different subunits. Subunits NuoB, C, D, E, F, and G constitute the peripheral sector of the complex. Requires [4Fe-4S] cluster as cofactor.

The protein resides in the cell inner membrane. The catalysed reaction is a quinone + NADH + 5 H(+)(in) = a quinol + NAD(+) + 4 H(+)(out). Its function is as follows. NDH-1 shuttles electrons from NADH, via FMN and iron-sulfur (Fe-S) centers, to quinones in the respiratory chain. The immediate electron acceptor for the enzyme in this species is believed to be ubiquinone. Couples the redox reaction to proton translocation (for every two electrons transferred, four hydrogen ions are translocated across the cytoplasmic membrane), and thus conserves the redox energy in a proton gradient. In Sulfurovum sp. (strain NBC37-1), this protein is NADH-quinone oxidoreductase subunit B.